Consider the following 183-residue polypeptide: UPF0200 protein MmarC7_0527 (183 aa).

8–15 (GMPGSGKS) provides a ligand contact to ATP.

The protein belongs to the UPF0200 family.

The polypeptide is UPF0200 protein MmarC7_0527 (Methanococcus maripaludis (strain C7 / ATCC BAA-1331)).